Reading from the N-terminus, the 339-residue chain is Sperm acrosome membrane-associated protein 6 (339 aa).

Positions 1–41 are cleaved as a signal peptide; sequence MTSQRSLSSPQTRRPSVMGLISLVGSIVLLFLLIFRASTWA. The CXXC motif signature appears at 42–45; sequence CLFC. 6 cysteine pairs are disulfide-bonded: Cys42–Cys155, Cys45–Cys158, Cys56–Cys70, Cys140–Cys163, Cys144–Cys169, and Cys186–Cys241. Residues 42-310 lie on the Extracellular side of the membrane; it reads CLFCFTTYEE…NPQALTLGNL (269 aa). The CXXC motif signature appears at 155–158; sequence CSGC. One can recognise an Ig-like domain in the interval 166-251; that stretch reads PLDCPVQDML…VILHDQRPLA (86 aa). Asn258 carries an N-linked (GlcNAc...) asparagine glycan. A helical transmembrane segment spans residues 311 to 331; that stretch reads FLLAATAALGSASVTLLVWLF. The Cytoplasmic portion of the chain corresponds to 332-339; sequence FRWYLSGN.

Belongs to the SPACA6 family. In terms of assembly, forms a complex with IZUMO1 and TMEM81 on spermatocyte cell membrane required for fertilization. In terms of tissue distribution, highly expressed in testis. Minor expression also detected in epididymis, seminal vesicle and ovary. Predominantly expressed in testicular germ cells during spermiogenesis. Most abundant in round spermatids and detected at lower levels in elongating spermatids.

Its subcellular location is the cytoplasmic vesicle. The protein localises to the secretory vesicle. It localises to the acrosome membrane. Sperm protein required for fusion of sperm with the egg membrane during fertilization. May regulate the expression of sperm surface protein DCST2. This Mus musculus (Mouse) protein is Sperm acrosome membrane-associated protein 6.